Consider the following 608-residue polypeptide: Glutamine--fructose-6-phosphate aminotransferase [isomerizing] (608 aa).

Catalysis depends on Cys-2, which acts as the Nucleophile; for GATase activity. The Glutamine amidotransferase type-2 domain occupies 2–217 (CGIVGYIGDK…DHEIAIIKKD (216 aa)). SIS domains are found at residues 285–424 (TKED…KKGT) and 453–598 (VIQK…VDKP). Residue Lys-603 is the For Fru-6P isomerization activity of the active site.

Homodimer.

It localises to the cytoplasm. The catalysed reaction is D-fructose 6-phosphate + L-glutamine = D-glucosamine 6-phosphate + L-glutamate. Catalyzes the first step in hexosamine metabolism, converting fructose-6P into glucosamine-6P using glutamine as a nitrogen source. This is Glutamine--fructose-6-phosphate aminotransferase [isomerizing] from Caldanaerobacter subterraneus subsp. tengcongensis (strain DSM 15242 / JCM 11007 / NBRC 100824 / MB4) (Thermoanaerobacter tengcongensis).